A 134-amino-acid polypeptide reads, in one-letter code: Small ribosomal subunit protein uS12 (134 aa).

Residues 1–27 (MPTIQQLVRKGRESFADKSKSPALNSC) are disordered. Residues 10-20 (KGRESFADKSK) show a composition bias toward basic and acidic residues. 3-methylthioaspartic acid is present on aspartate 89. The segment at 103–134 (DTAGVNGRTQRRSKYGAKRPKPGQAPAAKGKK) is disordered. The span at 111 to 123 (TQRRSKYGAKRPK) shows a compositional bias: basic residues. A compositionally biased stretch (low complexity) spans 124–134 (PGQAPAAKGKK).

The protein belongs to the universal ribosomal protein uS12 family. In terms of assembly, part of the 30S ribosomal subunit. Contacts proteins S8 and S17. May interact with IF1 in the 30S initiation complex.

Functionally, with S4 and S5 plays an important role in translational accuracy. Its function is as follows. Interacts with and stabilizes bases of the 16S rRNA that are involved in tRNA selection in the A site and with the mRNA backbone. Located at the interface of the 30S and 50S subunits, it traverses the body of the 30S subunit contacting proteins on the other side and probably holding the rRNA structure together. The combined cluster of proteins S8, S12 and S17 appears to hold together the shoulder and platform of the 30S subunit. In Porphyromonas gingivalis (strain ATCC 33277 / DSM 20709 / CIP 103683 / JCM 12257 / NCTC 11834 / 2561), this protein is Small ribosomal subunit protein uS12.